The chain runs to 129 residues: SOSS complex subunit C homolog (129 aa).

The tract at residues 105 to 129 is disordered; it reads RLEPLPSPATTPTTPNAPPSHSISK.

It belongs to the SOSS-C family.

This Drosophila simulans (Fruit fly) protein is SOSS complex subunit C homolog.